The chain runs to 418 residues: ATP-dependent RNA helicase RhlB (418 aa).

Residues 9–37 (TKFADLPLEKSLISGLTSQGYEYCTPIQA) carry the Q motif motif. The region spanning 40–219 (LPITLTGKDI…FEHMNDPESI (180 aa)) is the Helicase ATP-binding domain. Position 53–60 (53–60 (AQTGTGKT)) interacts with ATP. The DEAD box signature appears at 165–168 (DEAD). One can recognise a Helicase C-terminal domain in the interval 243 to 390 (KILLLLSLIE…CSEYDKNAML (148 aa)).

Belongs to the DEAD box helicase family. RhlB subfamily. Component of the RNA degradosome, which is a multiprotein complex involved in RNA processing and mRNA degradation.

Its subcellular location is the cytoplasm. It catalyses the reaction ATP + H2O = ADP + phosphate + H(+). In terms of biological role, DEAD-box RNA helicase involved in RNA degradation. Has RNA-dependent ATPase activity and unwinds double-stranded RNA. This Psychromonas ingrahamii (strain DSM 17664 / CCUG 51855 / 37) protein is ATP-dependent RNA helicase RhlB.